Here is a 379-residue protein sequence, read N- to C-terminus: Glutamate 5-kinase (379 aa).

An ATP-binding site is contributed by K15. Residues S56, D143, and N155 each coordinate substrate. 175–176 (SD) lines the ATP pocket. The region spanning 281–358 (RGTLAIDAGA…SDAAQLLGVR (78 aa)) is the PUA domain.

It belongs to the glutamate 5-kinase family.

The protein resides in the cytoplasm. It carries out the reaction L-glutamate + ATP = L-glutamyl 5-phosphate + ADP. Its pathway is amino-acid biosynthesis; L-proline biosynthesis; L-glutamate 5-semialdehyde from L-glutamate: step 1/2. Catalyzes the transfer of a phosphate group to glutamate to form L-glutamate 5-phosphate. The polypeptide is Glutamate 5-kinase (Nitrobacter winogradskyi (strain ATCC 25391 / DSM 10237 / CIP 104748 / NCIMB 11846 / Nb-255)).